The following is an 82-amino-acid chain: Small ribosomal subunit protein uS17 (82 aa).

Belongs to the universal ribosomal protein uS17 family. Part of the 30S ribosomal subunit.

In terms of biological role, one of the primary rRNA binding proteins, it binds specifically to the 5'-end of 16S ribosomal RNA. This Nitrobacter winogradskyi (strain ATCC 25391 / DSM 10237 / CIP 104748 / NCIMB 11846 / Nb-255) protein is Small ribosomal subunit protein uS17.